Here is a 168-residue protein sequence, read N- to C-terminus: Peptide deformylase (168 aa).

Fe cation is bound by residues cysteine 92 and histidine 134. Glutamate 135 is a catalytic residue. Residue histidine 138 participates in Fe cation binding.

It belongs to the polypeptide deformylase family. Fe(2+) is required as a cofactor.

The enzyme catalyses N-terminal N-formyl-L-methionyl-[peptide] + H2O = N-terminal L-methionyl-[peptide] + formate. In terms of biological role, removes the formyl group from the N-terminal Met of newly synthesized proteins. Requires at least a dipeptide for an efficient rate of reaction. N-terminal L-methionine is a prerequisite for activity but the enzyme has broad specificity at other positions. The sequence is that of Peptide deformylase from Stutzerimonas stutzeri (strain A1501) (Pseudomonas stutzeri).